A 477-amino-acid chain; its full sequence is Stromelysin-1 (477 aa).

The first 17 residues, 1–17, serve as a signal peptide directing secretion; sequence MKSLPILLLLCVAVCSA. Residues 18-99 constitute a propeptide, activation peptide; sequence YPLDGAARGE…PRCGVPDVGH (82 aa). The Cysteine switch signature appears at 90-97; that stretch reads PRCGVPDV. Position 92 (Cys-92) interacts with Zn(2+). Ca(2+) is bound by residues Asp-124 and Asp-158. The Zn(2+) site is built by His-168 and Asp-170. 4 residues coordinate Ca(2+): Asp-175, Gly-176, Gly-178, and Val-180. His-183 lines the Zn(2+) pocket. Residues Gly-190, Asn-192, and Asp-194 each coordinate Ca(2+). His-196 serves as a coordination point for Zn(2+). 3 residues coordinate Ca(2+): Asp-198, Asp-199, and Glu-201. His-218 contributes to the Zn(2+) binding site. Glu-219 is an active-site residue. The Zn(2+) site is built by His-222 and His-228. The interval 262 to 287 is disordered; it reads LYGPPPDSPETPLVPTEPVPPEPGTP. Positions 276–285 are enriched in pro residues; that stretch reads PTEPVPPEPG. Hemopexin repeat units follow at residues 287–336, 337–383, 385–433, and 434–477; these read PANC…WPSL, PSGV…GFPP, VRKI…FPGI, and DSKI…WLNC. The cysteines at positions 290 and 477 are disulfide-linked. Asp-297 contacts Ca(2+). 2 residues coordinate Ca(2+): Asp-389 and Asp-438.

The protein belongs to the peptidase M10A family. The cofactor is Ca(2+). Requires Zn(2+) as cofactor. Directly cleaved by HTRA2 to produce active form.

It is found in the secreted. Its subcellular location is the extracellular space. The protein resides in the extracellular matrix. The protein localises to the nucleus. It localises to the cytoplasm. The enzyme catalyses Preferential cleavage where P1', P2' and P3' are hydrophobic residues.. With respect to regulation, enzymatic activity is activated by HTRA2 in dopaminergic cells upon mitochondrial stress. Its function is as follows. Metalloproteinase with a rather broad substrate specificity that can degrade fibronectin, laminin, gelatins of type I, III, IV, and V; collagens III, IV, X, and IX, and cartilage proteoglycans. Activates different molecules including growth factors, plasminogen or other matrix metalloproteinases such as MMP9. Once released into the extracellular matrix (ECM), the inactive pro-enzyme is activated by the plasmin cascade signaling pathway. Also acts intracellularly. For example, in dopaminergic neurons, gets activated by the serine protease HTRA2 upon stress and plays a pivotal role in DA neuronal degeneration by mediating microglial activation and alpha-synuclein/SNCA cleavage. In addition, plays a role in immune response and possesses antiviral activity against various viruses such as vesicular stomatitis virus, influenza A virus (H1N1) and human herpes virus 1. Mechanistically, translocates from the cytoplasm into the cell nucleus upon virus infection to influence NF-kappa-B activities. This is Stromelysin-1 (MMP3) from Homo sapiens (Human).